We begin with the raw amino-acid sequence, 114 residues long: Histone H3-7 (114 aa).

A compositionally biased stretch (basic residues) spans 1–17; the sequence is NTGGKAPRKHIAHKQAK. The tract at residues 1–32 is disordered; the sequence is NTGGKAPRKHIAHKQAKKSSAAAATGGVKKPH. Residues 18 to 28 show a composition bias toward low complexity; the sequence is KSSAAAATGGV.

The protein belongs to the histone H3 family. In terms of assembly, the nucleosome is a histone octamer containing two molecules each of H2A, H2B, H3 and H4 assembled in one H3-H4 heterotetramer and two H2A-H2B heterodimers. The octamer wraps approximately 147 bp of DNA.

It localises to the nucleus. It is found in the chromosome. Its function is as follows. Core component of nucleosome. Nucleosomes wrap and compact DNA into chromatin, limiting DNA accessibility to the cellular machineries which require DNA as a template. Histones thereby play a central role in transcription regulation, DNA repair, DNA replication and chromosomal stability. DNA accessibility is regulated via a complex set of post-translational modifications of histones, also called histone code, and nucleosome remodeling. The polypeptide is Histone H3-7 (H3-7) (Stylonychia lemnae (Ciliate)).